Here is a 246-residue protein sequence, read N- to C-terminus: Putative outer membrane protein YiaT (246 aa).

The first 21 residues, 1-21, serve as a signal peptide directing secretion; the sequence is MLINRNIVALFALPFMASATA.

Belongs to the MipA/OmpV family.

It is found in the cell outer membrane. This is Putative outer membrane protein YiaT (yiaT) from Escherichia coli (strain K12).